The chain runs to 140 residues: Phosphopantetheine adenylyltransferase (140 aa).

Ser-9 is a binding site for substrate. Residues 9–10 (SF) and His-17 each bind ATP. Substrate contacts are provided by Lys-41, Thr-74, and Arg-88. Residues 89-91 (GLR), Glu-99, and 124-130 (KRSLSST) contribute to the ATP site.

It belongs to the bacterial CoaD family. In terms of assembly, homohexamer. The cofactor is Mg(2+).

It localises to the cytoplasm. It catalyses the reaction (R)-4'-phosphopantetheine + ATP + H(+) = 3'-dephospho-CoA + diphosphate. It participates in cofactor biosynthesis; coenzyme A biosynthesis; CoA from (R)-pantothenate: step 4/5. Functionally, reversibly transfers an adenylyl group from ATP to 4'-phosphopantetheine, yielding dephospho-CoA (dPCoA) and pyrophosphate. This is Phosphopantetheine adenylyltransferase from Mycoplasma capricolum subsp. capricolum (strain California kid / ATCC 27343 / NCTC 10154).